The sequence spans 320 residues: o-succinylbenzoate synthase (320 aa).

Lysine 133 (proton donor) is an active-site residue. Residues aspartate 161, glutamate 190, and aspartate 213 each contribute to the Mg(2+) site. The active-site Proton acceptor is lysine 235.

This sequence belongs to the mandelate racemase/muconate lactonizing enzyme family. MenC type 1 subfamily. A divalent metal cation is required as a cofactor.

The catalysed reaction is (1R,6R)-6-hydroxy-2-succinyl-cyclohexa-2,4-diene-1-carboxylate = 2-succinylbenzoate + H2O. It participates in quinol/quinone metabolism; 1,4-dihydroxy-2-naphthoate biosynthesis; 1,4-dihydroxy-2-naphthoate from chorismate: step 4/7. It functions in the pathway quinol/quinone metabolism; menaquinone biosynthesis. In terms of biological role, converts 2-succinyl-6-hydroxy-2,4-cyclohexadiene-1-carboxylate (SHCHC) to 2-succinylbenzoate (OSB). The sequence is that of o-succinylbenzoate synthase from Escherichia coli O139:H28 (strain E24377A / ETEC).